Here is an 83-residue protein sequence, read N- to C-terminus: uncharacterized protein (83 aa).

The protein belongs to the BolA/IbaG family.

This is an uncharacterized protein from Acinetobacter guillouiae (Acinetobacter genomosp. 11).